The chain runs to 447 residues: Signal recognition particle 54 kDa protein (447 aa).

Residues 103–110 (GVQGSGKT), 185–189 (DTAGR), and 245–248 (TKMD) contribute to the GTP site.

This sequence belongs to the GTP-binding SRP family. SRP54 subfamily. In terms of assembly, part of the signal recognition particle protein translocation system, which is composed of SRP and FtsY. Archaeal SRP consists of a 7S RNA molecule of 300 nucleotides and two protein subunits: SRP54 and SRP19.

The protein localises to the cytoplasm. It carries out the reaction GTP + H2O = GDP + phosphate + H(+). Functionally, involved in targeting and insertion of nascent membrane proteins into the cytoplasmic membrane. Binds to the hydrophobic signal sequence of the ribosome-nascent chain (RNC) as it emerges from the ribosomes. The SRP-RNC complex is then targeted to the cytoplasmic membrane where it interacts with the SRP receptor FtsY. In Saccharolobus islandicus (strain Y.N.15.51 / Yellowstone #2) (Sulfolobus islandicus), this protein is Signal recognition particle 54 kDa protein.